The chain runs to 142 residues: D-aminoacyl-tRNA deacylase (142 aa).

Positions 133–134 match the Gly-cisPro motif, important for rejection of L-amino acids motif; it reads GP.

This sequence belongs to the DTD family. In terms of assembly, homodimer.

The protein localises to the cytoplasm. The catalysed reaction is glycyl-tRNA(Ala) + H2O = tRNA(Ala) + glycine + H(+). It catalyses the reaction a D-aminoacyl-tRNA + H2O = a tRNA + a D-alpha-amino acid + H(+). In terms of biological role, an aminoacyl-tRNA editing enzyme that deacylates mischarged D-aminoacyl-tRNAs. Also deacylates mischarged glycyl-tRNA(Ala), protecting cells against glycine mischarging by AlaRS. Acts via tRNA-based rather than protein-based catalysis; rejects L-amino acids rather than detecting D-amino acids in the active site. By recycling D-aminoacyl-tRNA to D-amino acids and free tRNA molecules, this enzyme counteracts the toxicity associated with the formation of D-aminoacyl-tRNA entities in vivo and helps enforce protein L-homochirality. This Acidothermus cellulolyticus (strain ATCC 43068 / DSM 8971 / 11B) protein is D-aminoacyl-tRNA deacylase.